Consider the following 796-residue polypeptide: U-box domain-containing protein 51 (796 aa).

Disordered regions lie at residues 163 to 195 (DMDTETSIADDRSESRFSSDSHSGTVSSTSSHQ), 218 to 240 (TNIGKQNNEPHHHHHNRAGSLDV), and 270 to 292 (RSSQMEEASSSSTYSDPTSSSSQ). Basic and acidic residues predominate over residues 171–181 (ADDRSESRFSS). A compositionally biased stretch (low complexity) spans 182 to 195 (DSHSGTVSSTSSHQ). Residues 270-291 (RSSQMEEASSSSTYSDPTSSSS) are compositionally biased toward low complexity. The stretch at 298 to 407 (ELEKLKIELR…QRLEDALEGG (110 aa)) forms a coiled coil. The region spanning 429-700 (FSDELKIGVG…DLGKEILPVL (272 aa)) is the Protein kinase domain. ATP contacts are provided by residues 435-443 (IGVGGYGSV) and K456. The active-site Proton acceptor is the D557. The U-box domain occupies 724 to 796 (NAPTHFYCPI…IKEWRSQLIK (73 aa)).

Belongs to the protein kinase superfamily. Ser/Thr protein kinase family.

It carries out the reaction L-seryl-[protein] + ATP = O-phospho-L-seryl-[protein] + ADP + H(+). The catalysed reaction is L-threonyl-[protein] + ATP = O-phospho-L-threonyl-[protein] + ADP + H(+). The enzyme catalyses S-ubiquitinyl-[E2 ubiquitin-conjugating enzyme]-L-cysteine + [acceptor protein]-L-lysine = [E2 ubiquitin-conjugating enzyme]-L-cysteine + N(6)-ubiquitinyl-[acceptor protein]-L-lysine.. It participates in protein modification; protein ubiquitination. In terms of biological role, functions as an E3 ubiquitin ligase. In Arabidopsis thaliana (Mouse-ear cress), this protein is U-box domain-containing protein 51 (PUB51).